The following is a 644-amino-acid chain: 1-deoxy-D-xylulose-5-phosphate synthase (644 aa).

Thiamine diphosphate contacts are provided by residues H78 and 120–122 (GHA). D149 serves as a coordination point for Mg(2+). Thiamine diphosphate contacts are provided by residues 150–151 (AA), N178, and E373. Residue N178 participates in Mg(2+) binding.

The protein belongs to the transketolase family. DXPS subfamily. Homodimer. Mg(2+) serves as cofactor. It depends on thiamine diphosphate as a cofactor.

It carries out the reaction D-glyceraldehyde 3-phosphate + pyruvate + H(+) = 1-deoxy-D-xylulose 5-phosphate + CO2. It functions in the pathway metabolic intermediate biosynthesis; 1-deoxy-D-xylulose 5-phosphate biosynthesis; 1-deoxy-D-xylulose 5-phosphate from D-glyceraldehyde 3-phosphate and pyruvate: step 1/1. Catalyzes the acyloin condensation reaction between C atoms 2 and 3 of pyruvate and glyceraldehyde 3-phosphate to yield 1-deoxy-D-xylulose-5-phosphate (DXP). This chain is 1-deoxy-D-xylulose-5-phosphate synthase, found in Chlamydia felis (strain Fe/C-56) (Chlamydophila felis).